Consider the following 406-residue polypeptide: Probable G-protein coupled receptor tkr-1 (406 aa).

At 1-47 (MNQEFLIQLGERACKNAENLTLPAELEGIFFCAPSSRESLATQVFVA) the chain is on the extracellular side. Residues 48 to 68 (IAFVLLMATAIIGNSVVMWII) traverse the membrane as a helical segment. Over 69 to 76 (YQHKVMHY) the chain is Cytoplasmic. Residues 77 to 97 (GFNYFLFNMAFADLLIALFNV) traverse the membrane as a helical segment. Residues 98–115 (GTSWTYNLYYDWWYGDLC) lie on the Extracellular side of the membrane. A helical membrane pass occupies residues 116 to 136 (TLTSFFGIAPTTVSVCSMMAL). The Cytoplasmic segment spans residues 137–158 (SWDRCQAVVNPLQKRPLSRKRS). A helical membrane pass occupies residues 159 to 179 (VIAILIIWVVSTVTALPFAIA). Over 180 to 204 (ASVNSLYTYDVVTSTVSKAHVCSAP) the chain is Extracellular. The helical transmembrane segment at 205–225 (VNTFFEKVLFGIQYALPIIIL) threads the bilayer. The Cytoplasmic portion of the chain corresponds to 226 to 261 (GSTFTRIAVAFRATNEATDSSLKNNHTRAKSKAVKM). The helical transmembrane segment at 262–282 (LFLMVVAFVVCWLPYHIYHAF) threads the bilayer. The Extracellular portion of the chain corresponds to 283 to 297 (ALEEFFDAARGKYAY). Residues 298-318 (LLIYWIAMSSCAYNPIIYCFA) form a helical membrane-spanning segment. At 319-406 (NERFRIGFRY…KVHLLSCHER (88 aa)) the chain is on the cytoplasmic side.

It belongs to the G-protein coupled receptor 1 family.

It localises to the cell membrane. Functionally, not known. Putative receptor. The protein is Probable G-protein coupled receptor tkr-1 (tkr-1) of Caenorhabditis elegans.